Here is a 116-residue protein sequence, read N- to C-terminus: Large ribosomal subunit protein bL21c (116 aa).

The protein belongs to the bacterial ribosomal protein bL21 family. As to quaternary structure, part of the 50S ribosomal subunit.

The protein localises to the plastid. It is found in the chloroplast. Functionally, this protein binds to 23S rRNA. The protein is Large ribosomal subunit protein bL21c of Emiliania huxleyi (Coccolithophore).